Consider the following 209-residue polypeptide: Ubiquitin-conjugating enzyme E2 S (209 aa).

Residues 14–160 (QTIRQVMREL…ARMMTEIHAQ (147 aa)) form the UBC core domain. The Glycyl thioester intermediate role is filled by cysteine 98. A disordered region spans residues 165-209 (GVGATGDAKDDGGPSTKKHAGLDKKLQDKKKEKLLKEKKRMLKRL). Basic and acidic residues predominate over residues 184 to 199 (AGLDKKLQDKKKEKLL). Residues 200 to 209 (KEKKRMLKRL) show a composition bias toward basic residues.

This sequence belongs to the ubiquitin-conjugating enzyme family.

It catalyses the reaction S-ubiquitinyl-[E1 ubiquitin-activating enzyme]-L-cysteine + [E2 ubiquitin-conjugating enzyme]-L-cysteine = [E1 ubiquitin-activating enzyme]-L-cysteine + S-ubiquitinyl-[E2 ubiquitin-conjugating enzyme]-L-cysteine.. It participates in protein modification; protein ubiquitination. Functionally, catalyzes the covalent attachment of ubiquitin to other proteins. Acts as an essential factor of the anaphase promoting complex/cyclosome (APC/C), a cell cycle-regulated ubiquitin ligase that controls progression through mitosis. Acts by specifically elongating polyubiquitin chains initiated by the E2 enzyme vih/UbcH10 on APC/C substrates, enhancing the degradation of APC/C substrates by the proteasome and promoting mitotic exit. This Drosophila simulans (Fruit fly) protein is Ubiquitin-conjugating enzyme E2 S.